Reading from the N-terminus, the 1071-residue chain is ATP-dependent helicase/deoxyribonuclease subunit B (1071 aa).

This sequence belongs to the helicase family. AddB/RexB type 2 subfamily. As to quaternary structure, heterodimer of AddA and RexB. The cofactor is Mg(2+).

Its function is as follows. The heterodimer acts as both an ATP-dependent DNA helicase and an ATP-dependent, dual-direction single-stranded exonuclease. Recognizes the chi site generating a DNA molecule suitable for the initiation of homologous recombination. This subunit has 5' -&gt; 3' nuclease activity but not helicase activity. This is ATP-dependent helicase/deoxyribonuclease subunit B from Streptococcus pyogenes serotype M18 (strain MGAS8232).